The following is a 403-amino-acid chain: Cystinosin homolog (403 aa).

The Lumenal segment spans residues 1–122 (MKLPVSILFF…YSRITVIRSH (122 aa)). Asparagine 45, asparagine 52, asparagine 78, and asparagine 96 each carry an N-linked (GlcNAc...) asparagine glycan. Residues 123 to 143 (WLAILIQIVGWTYFAAWSVSF) form a helical membrane-spanning segment. The 67-residue stretch at 124 to 190 (LAILIQIVGW…MYYNSHVKNI (67 aa)) folds into the PQ-loop 1 domain. Over 144–162 (YPQMYLNFKRKSVVGLNFD) the chain is Cytoplasmic. The chain crosses the membrane as a helical span at residues 163 to 183 (FLSLNLVGFGAYAMFNLLMYY). At 184–206 (NSHVKNIYSMENPRSPPPVLLND) the chain is on the lumenal side. Residues 207–227 (VVFAVHAFLACFVTILQCIFY) form a helical membrane-spanning segment. Residues 228 to 237 (ERDQQRISTK) are Cytoplasmic-facing. A helical transmembrane segment spans residues 238 to 258 (CIILIIGLVSFGFVSVVVTVL). The Lumenal portion of the chain corresponds to 259 to 260 (NK). A helical transmembrane segment spans residues 261–283 (ITILDFVVSLSYIKMAVTCCKYF). The region spanning 266–326 (FVVSLSYIKM…MVLQAINVND (61 aa)) is the PQ-loop 2 domain. At 284–294 (PQAYFNYQRKS) the chain is on the cytoplasmic side. The chain crosses the membrane as a helical span at residues 295-315 (TVGWSIGNILLDFTGGSLDIL). Residues 316–336 (QMVLQAINVNDWSAFYANPVK) are Lumenal-facing. Residues 337-357 (FGLGFVSIFFDIIFMIQHYAL) form a helical membrane-spanning segment. Topologically, residues 358 to 403 (YPDAEVPHNEYHGVDNPDPDSIVRDAEHGAADNESMESTDPIIVHD) are cytoplasmic. Basic and acidic residues predominate over residues 374–388 (PDPDSIVRDAEHGAA). The disordered stretch occupies residues 374–403 (PDPDSIVRDAEHGAADNESMESTDPIIVHD).

Belongs to the cystinosin family.

The protein resides in the lysosome membrane. It localises to the cytoplasmic vesicle. It is found in the phagosome. The enzyme catalyses L-cystine(out) + H(+)(out) = L-cystine(in) + H(+)(in). Functionally, cystine/H(+) symporter that mediates export of cystine, the oxidized dimer of cysteine, from lysosomes. May play a role in the degradation of engulfed apoptotic cells. This Caenorhabditis briggsae protein is Cystinosin homolog (ctns-1).